The chain runs to 283 residues: 4-diphosphocytidyl-2-C-methyl-D-erythritol kinase (283 aa).

K10 is a catalytic residue. Residue 99 to 109 (PMGGGLGGGSS) participates in ATP binding. The active site involves D141.

Belongs to the GHMP kinase family. IspE subfamily. Homodimer.

The enzyme catalyses 4-CDP-2-C-methyl-D-erythritol + ATP = 4-CDP-2-C-methyl-D-erythritol 2-phosphate + ADP + H(+). It functions in the pathway isoprenoid biosynthesis; isopentenyl diphosphate biosynthesis via DXP pathway; isopentenyl diphosphate from 1-deoxy-D-xylulose 5-phosphate: step 3/6. Functionally, catalyzes the phosphorylation of the position 2 hydroxy group of 4-diphosphocytidyl-2C-methyl-D-erythritol. In Salmonella choleraesuis (strain SC-B67), this protein is 4-diphosphocytidyl-2-C-methyl-D-erythritol kinase.